The chain runs to 354 residues: L-Lys-D/L-Arg epimerase (354 aa).

Residues Thr135 and 160 to 162 (KIK) contribute to the substrate site. Residues Asp190, Glu215, and Asp240 each coordinate Mg(2+). Substrate contacts are provided by residues Lys265, Asp295, and 318–320 (DLD).

It belongs to the mandelate racemase/muconate lactonizing enzyme family. It depends on Mg(2+) as a cofactor.

Catalyzes the epimerization of L-Lys-L-Arg to L-Lys-D-Arg (in vitro). Catalyzes the epimerization of positively charged dipeptides, with a preference for substrates with a basic amino acid in the second position. Has epimerase activity with L-Lys-L-Lys, L-Arg-L-Arg, L-Val-L-Arg, L-Val-L-Lys and L-Ala-L-Arg (in vitro). This chain is L-Lys-D/L-Arg epimerase, found in Desulforapulum autotrophicum (strain ATCC 43914 / DSM 3382 / VKM B-1955 / HRM2) (Desulfobacterium autotrophicum).